Here is a 356-residue protein sequence, read N- to C-terminus: Glutamine synthetase cytosolic isozyme (356 aa).

A GS beta-grasp domain is found at 19–99; that stretch reads IIAEYIWIGG…VMCDAYTPAG (81 aa). The interval 38–66 is disordered; that stretch reads RTLPGPVTDPSQLPKWNYDGSSTGQAPGE. Residues 106 to 356 enclose the GS catalytic domain; that stretch reads KRHAAAKIFS…IADTTILWKP (251 aa).

The protein belongs to the glutamine synthetase family. As to quaternary structure, homooctamer.

Its subcellular location is the cytoplasm. The enzyme catalyses L-glutamate + NH4(+) + ATP = L-glutamine + ADP + phosphate + H(+). The sequence is that of Glutamine synthetase cytosolic isozyme from Medicago sativa (Alfalfa).